The sequence spans 411 residues: Tyrosine--tRNA ligase (411 aa).

Position 33 (Y33) interacts with L-tyrosine. Positions 38 to 47 match the 'HIGH' region motif; the sequence is PTADSLHLGN. 2 residues coordinate L-tyrosine: Y160 and Q164. The short motif at 222–226 is the 'KMSKS' region element; that stretch reads KFGKS. K225 provides a ligand contact to ATP. Residues 346–410 form the S4 RNA-binding domain; the sequence is VNLVNFLVEN…GKKKILICKV (65 aa).

The protein belongs to the class-I aminoacyl-tRNA synthetase family. TyrS type 1 subfamily. In terms of assembly, homodimer.

It is found in the cytoplasm. The catalysed reaction is tRNA(Tyr) + L-tyrosine + ATP = L-tyrosyl-tRNA(Tyr) + AMP + diphosphate + H(+). In terms of biological role, catalyzes the attachment of tyrosine to tRNA(Tyr) in a two-step reaction: tyrosine is first activated by ATP to form Tyr-AMP and then transferred to the acceptor end of tRNA(Tyr). In Mycoplasmopsis synoviae (strain 53) (Mycoplasma synoviae), this protein is Tyrosine--tRNA ligase.